A 131-amino-acid chain; its full sequence is Large ribosomal subunit protein bL19 (131 aa).

Belongs to the bacterial ribosomal protein bL19 family.

In terms of biological role, this protein is located at the 30S-50S ribosomal subunit interface and may play a role in the structure and function of the aminoacyl-tRNA binding site. This Anaeromyxobacter dehalogenans (strain 2CP-C) protein is Large ribosomal subunit protein bL19.